The chain runs to 1009 residues: Glutamate receptor ionotropic, delta-1 (1009 aa).

A signal peptide spans 1 to 20 (MEALTLWLLPWICQCVTVRA). The tract at residues 21 to 436 (DSIIHIGAIF…ERPMGSRLQG (416 aa)) is interaction with CBLN1. Over 21–562 (DSIIHIGAIF…SIFSLFAPFD (542 aa)) the chain is Extracellular. Cystine bridges form between C80–C351, C96–C128, and C294–C306. Residues N131 and N200 are each glycosylated (N-linked (GlcNAc...) asparagine). 2 N-linked (GlcNAc...) asparagine glycosylation sites follow: N422 and N498. Residues E527, V530, and D531 each coordinate Ca(2+). Residues 563-583 (FAVWACIAAAIPVVGVLIFVL) form a helical membrane-spanning segment. The Cytoplasmic segment spans residues 584 to 637 (NRIQAVRSQSATQPRPSASATLHSAIWIVYGAFVQQGGESSVNSVAMRIVMGSW). Residues 638 to 658 (WLFTLIVCSSYTANLAAFLTV) traverse the membrane as a helical segment. Over 659–830 (SRMDNPIRTF…TEGKSLKLHS (172 aa)) the chain is Extracellular. Positions 753, 755, and 757 each coordinate Ca(2+). Residues 831 to 851 (FAGVFCILAIGLLLACLVAAL) traverse the membrane as a helical segment. The Cytoplasmic segment spans residues 852–1009 (ELWWNSNRCH…ALDTSHGTSI (158 aa)). Residues 931–942 (LPEQSSHGTSRT) show a composition bias toward polar residues. The tract at residues 931–960 (LPEQSSHGTSRTLSSGPSSNLPLPLSSSAT) is disordered. A compositionally biased stretch (low complexity) spans 943-958 (LSSGPSSNLPLPLSSS).

This sequence belongs to the glutamate-gated ion channel (TC 1.A.10.1) family. GRID1 subfamily. In terms of assembly, homodimer. Interacts (via extracellular N-terminal domain) with CBLN1 (via C1q domain), and more weakly with CBLN2; the interactions mediate the trans-synaptic adhesion complexes also with neurexins and are required for ligand-gated cation channel activity. As to expression, equally in forebrain and cerebellum.

The protein localises to the postsynaptic cell membrane. It catalyses the reaction Ca(2+)(in) = Ca(2+)(out). The enzyme catalyses Na(+)(in) = Na(+)(out). In terms of biological role, member of the ionotropic glutamate receptor family, which plays a crucial role in synaptic organization and signal transduction in the central nervous system. Although it shares structural features with ionotropic glutamate receptors, does not bind glutamate as a primary ligand. Instead, forms trans-synaptic adhesion complexes with presynaptic neurexins and cerebellins, regulating NMDA and AMPA receptor activity and influencing synaptic plasticity through signal transduction. In the presence of NRX1B-CBLN1, forms cation-selective channels that are proposed to be gated by glycine and D-serine. However, recent research disputes this ligand-gated cation channel activity. Cation-selective ion channel can be triggered by GRM1 in dopaminergic neurons. Also acts as a receptor for GABA, modulating inhibitory synaptic plasticity through non-ionotropic mechanisms. This chain is Glutamate receptor ionotropic, delta-1 (Grid1), found in Mus musculus (Mouse).